Consider the following 142-residue polypeptide: Large ribosomal subunit protein uL11 (142 aa).

This sequence belongs to the universal ribosomal protein uL11 family. In terms of assembly, part of the ribosomal stalk of the 50S ribosomal subunit. Interacts with L10 and the large rRNA to form the base of the stalk. L10 forms an elongated spine to which L12 dimers bind in a sequential fashion forming a multimeric L10(L12)X complex. One or more lysine residues are methylated.

Functionally, forms part of the ribosomal stalk which helps the ribosome interact with GTP-bound translation factors. In Enterobacter sp. (strain 638), this protein is Large ribosomal subunit protein uL11.